Here is a 470-residue protein sequence, read N- to C-terminus: Glutamate--tRNA ligase 2 (470 aa).

The 'HIGH' region signature appears at 11 to 21 (PSPTGHLHLGG). The 'KMSKS' region signature appears at 238–242 (KLSKR). Residue lysine 241 participates in ATP binding.

The protein belongs to the class-I aminoacyl-tRNA synthetase family. Glutamate--tRNA ligase type 1 subfamily. As to quaternary structure, monomer.

It is found in the cytoplasm. It catalyses the reaction tRNA(Glu) + L-glutamate + ATP = L-glutamyl-tRNA(Glu) + AMP + diphosphate. Its function is as follows. Catalyzes the attachment of glutamate to tRNA(Glu) in a two-step reaction: glutamate is first activated by ATP to form Glu-AMP and then transferred to the acceptor end of tRNA(Glu). This is Glutamate--tRNA ligase 2 from Ehrlichia ruminantium (strain Welgevonden).